A 632-amino-acid chain; its full sequence is Epsin-3 (632 aa).

Residues R8, K11, R25, N30, R63, and H73 each coordinate a 1,2-diacyl-sn-glycero-3-phospho-(1D-myo-inositol-4,5-bisphosphate). One can recognise an ENTH domain in the interval 12–144; sequence NIVHNYSEAE…KDEERLRQER (133 aa). The disordered stretch occupies residues 172 to 214; it reads YGEDYSRSRGSPSSYNSSSSSPRYTSDLEQARPQTSGEEELQL. Positions 179-196 are enriched in low complexity; it reads SRGSPSSYNSSSSSPRYT. S191 and S192 each carry phosphoserine. UIM domains follow at residues 209 to 228 and 236 to 255; these read EEEL…AEKP and DEDL…HEKE. Positions 257-296 are disordered; sequence RSWQGDGSPMANGAGAVVHHQRDREPEREERKEEEKLKTS. Residue S264 is modified to Phosphoserine. A compositionally biased stretch (basic and acidic residues) spans 276-294; sequence HQRDREPEREERKEEEKLK. 8 consecutive repeat copies span residues 321–323, 344–346, 371–373, 387–389, 404–406, 524–526, 537–539, and 629–631. Residues 321-406 are 5 X 3 AA repeats of [DE]-P-W; sequence DPWDIPGFRP…KLPSTGADPW (86 aa). Disordered regions lie at residues 326–501, 525–560, and 604–632; these read PGFR…SFLG, PFLT…PALG, and AFAP…NPFL. Positions 353-371 are enriched in polar residues; it reads TVLSRSQPWDLTPMLSSSE. Residues 524–631 form a 3 X 3 AA repeats of N-P-F region; it reads NPFLTGLSAP…PPPQTGTNPF (108 aa).

This sequence belongs to the epsin family. As to expression, detected in migrating keratinocytes from wounded skin, but not in differentiating keratinocytes or in normal skin. Detected in chronic wounds, basal cell carcinoma and ulcerative colitis.

The protein localises to the cytoplasm. The protein resides in the perinuclear region. It localises to the cytoplasmic vesicle. It is found in the clathrin-coated vesicle. Its subcellular location is the nucleus. The polypeptide is Epsin-3 (EPN3) (Homo sapiens (Human)).